A 358-amino-acid chain; its full sequence is UDP-N-acetylglucosamine--N-acetylmuramyl-(pentapeptide) pyrophosphoryl-undecaprenol N-acetylglucosamine transferase (358 aa).

UDP-N-acetyl-alpha-D-glucosamine-binding positions include 11–13 (TGG), N120, R161, S188, and Q282.

The protein belongs to the glycosyltransferase 28 family. MurG subfamily.

The protein localises to the cell inner membrane. It catalyses the reaction di-trans,octa-cis-undecaprenyl diphospho-N-acetyl-alpha-D-muramoyl-L-alanyl-D-glutamyl-meso-2,6-diaminopimeloyl-D-alanyl-D-alanine + UDP-N-acetyl-alpha-D-glucosamine = di-trans,octa-cis-undecaprenyl diphospho-[N-acetyl-alpha-D-glucosaminyl-(1-&gt;4)]-N-acetyl-alpha-D-muramoyl-L-alanyl-D-glutamyl-meso-2,6-diaminopimeloyl-D-alanyl-D-alanine + UDP + H(+). The protein operates within cell wall biogenesis; peptidoglycan biosynthesis. Its function is as follows. Cell wall formation. Catalyzes the transfer of a GlcNAc subunit on undecaprenyl-pyrophosphoryl-MurNAc-pentapeptide (lipid intermediate I) to form undecaprenyl-pyrophosphoryl-MurNAc-(pentapeptide)GlcNAc (lipid intermediate II). This Synechococcus sp. (strain CC9605) protein is UDP-N-acetylglucosamine--N-acetylmuramyl-(pentapeptide) pyrophosphoryl-undecaprenol N-acetylglucosamine transferase.